The primary structure comprises 1101 residues: ATP-dependent DNA helicase mph1 (1101 aa).

Disordered stretches follow at residues 22–59, 95–138, 154–231, and 250–270; these read PGTSDTVESVQTNNRPAKQSDISISQGNEEDEFQSPDR, LTQP…QYHD, FEEE…TNRP, and SSQRGEQIFSPPEKSEPPTHH. Residues 24-48 show a composition bias toward polar residues; it reads TSDTVESVQTNNRPAKQSDISISQG. Positions 170–190 are enriched in low complexity; sequence TPARTAAAPCAAPKGTAADVP. The segment covering 191–202 has biased composition (acidic residues); it reads FDLDDIPDDAFD. The span at 209–228 shows a compositional bias: polar residues; it reads PPRSTSQATRGPPVQSQFRT. A Helicase ATP-binding domain is found at 296-464; that stretch reads IAQRGLFHNL…AIIDDLGIAK (169 aa). 309–316 serves as a coordination point for ATP; the sequence is LPTGLGKT. The DEAH box signature appears at 412–415; that stretch reads DEAH. The Helicase C-terminal domain maps to 634–808; it reads YLKQVVLNHF…GTRFTFHDDK (175 aa). Disordered regions lie at residues 824–890 and 991–1067; these read RQID…PTPE and SRDP…QDAF. Residues 842 to 854 are compositionally biased toward basic residues; it reads RRARPPKRPPKKF.

Belongs to the DEAD box helicase family. DEAH subfamily. FANCM sub-subfamily. As to quaternary structure, interacts with the MHF histone-fold complex to form the FANCM-MHF complex.

It localises to the nucleus. The catalysed reaction is ATP + H2O = ADP + phosphate + H(+). In terms of biological role, ATP-dependent DNA helicase involved in DNA damage repair by homologous recombination and in genome maintenance. Capable of unwinding D-loops. Plays a role in limiting crossover recombinants during mitotic DNA double-strand break (DSB) repair. Component of a FANCM-MHF complex which promotes gene conversion at blocked replication forks, probably by reversal of the stalled fork. The protein is ATP-dependent DNA helicase mph1 of Aspergillus fumigatus (strain CBS 144.89 / FGSC A1163 / CEA10) (Neosartorya fumigata).